The following is a 254-amino-acid chain: Ribosomal RNA small subunit methyltransferase J (254 aa).

Residues arginine 107–aspartate 108, glutamate 123–arginine 124, and aspartate 174 contribute to the S-adenosyl-L-methionine site.

The protein belongs to the methyltransferase superfamily. RsmJ family.

The protein localises to the cytoplasm. The enzyme catalyses guanosine(1516) in 16S rRNA + S-adenosyl-L-methionine = N(2)-methylguanosine(1516) in 16S rRNA + S-adenosyl-L-homocysteine + H(+). Its function is as follows. Specifically methylates the guanosine in position 1516 of 16S rRNA. This chain is Ribosomal RNA small subunit methyltransferase J, found in Coxiella burnetii (strain Dugway 5J108-111).